The chain runs to 595 residues: Probable translation initiation factor IF-2 (595 aa).

In terms of domain architecture, tr-type G spans 11 to 225 (LRTPIVAVLG…ILVGLAQRYL (215 aa)). Residues 20–27 (GHVDHGKT) form a G1 region. 20–27 (GHVDHGKT) contributes to the GTP binding site. A G2 region spans residues 45–49 (GITQH). Residues 81 to 84 (DTPG) are G3. Residues 81 to 85 (DTPGH) and 135 to 138 (NKID) contribute to the GTP site. Residues 135–138 (NKID) form a G4 region. The segment at 203 to 205 (SAL) is G5.

Belongs to the TRAFAC class translation factor GTPase superfamily. Classic translation factor GTPase family. IF-2 subfamily.

Its function is as follows. Function in general translation initiation by promoting the binding of the formylmethionine-tRNA to ribosomes. Seems to function along with eIF-2. The polypeptide is Probable translation initiation factor IF-2 (infB) (Archaeoglobus fulgidus (strain ATCC 49558 / DSM 4304 / JCM 9628 / NBRC 100126 / VC-16)).